The chain runs to 124 residues: SPbeta prophage-derived uncharacterized protein YoqO (124 aa).

The next 2 membrane-spanning stretches (helical) occupy residues 54–74 (LVVI…LLSF) and 88–108 (VIFI…ISIM).

It localises to the cell membrane. This Bacillus subtilis (strain 168) protein is SPbeta prophage-derived uncharacterized protein YoqO (yoqO).